The chain runs to 125 residues: RxLR effector protein Avh6 (125 aa).

The signal sequence occupies residues 1 to 25 (MRLSSTTFVVLAAVLLASGTAVSKA). The RxLR-dEER signature appears at 48-70 (RFLRSHHTEDGKAKLSNYDNEER).

Belongs to the RxLR effector family.

The protein resides in the secreted. It localises to the host cell. In terms of biological role, effector that suppresses plant defense responses during the early stages of pathogen infection. Suppresses cell death induced by effectors and PAMPs in plant hosts. Triggers a hypersensitive response (HR) in the presence of Rps1d. Suppresses BAX-induced cell death and enhanced P.capsici infection in Nicotiana benthamiana. Also suppresses effector-triggered immunity induction by associating with Avr1b and Rps1b, suggesting a role in suppressing plant immunity. This chain is RxLR effector protein Avh6, found in Phytophthora sojae (Soybean stem and root rot agent).